A 37-amino-acid polypeptide reads, in one-letter code: Kappa-actitoxin-Bcs3b (37 aa).

A ShKT domain is found at 2–37 (CKDGFPTATCQHAKLVGNCKNSQKYRANCAKTCGPC). Intrachain disulfides connect Cys-2–Cys-37, Cys-11–Cys-30, and Cys-20–Cys-34. The interval 25–26 (KY) is crucial for binding to potassium channels.

This sequence belongs to the sea anemone type 1 potassium channel toxin family. Type 1b subfamily.

It localises to the secreted. Its subcellular location is the nematocyst. Its function is as follows. Inhibits voltage-gated potassium channels (IC(50)=14.42 nM for rKCNA1/Kv1.1, IC(50)=80.4 nM for rKCNA2/Kv1.2, IC(50)=7.76 nM for rKCNA6/Kv1.6, IC(50)=13.12 nM for hKCNA3/Kv1.3, and IC(50)=49.14 nM for insect Shaker IR). Binds the Shaker IR channels in a voltage-independent manner. The chain is Kappa-actitoxin-Bcs3b from Bunodosoma caissarum (Sea anemone).